The chain runs to 538 residues: Phosphoenolpyruvate carboxykinase (ATP) (538 aa).

Substrate-binding residues include arginine 64, tyrosine 205, and lysine 211. ATP-binding positions include lysine 211, histidine 230, and 246-254; that span reads GLSGTGKTT. Lysine 211 and histidine 230 together coordinate Mn(2+). Aspartate 267 contacts Mn(2+). ATP-binding positions include glutamate 295, arginine 331, 447–448, and threonine 453; that span reads RI. Arginine 331 contacts substrate.

The protein belongs to the phosphoenolpyruvate carboxykinase (ATP) family. In terms of assembly, monomer. The cofactor is Mn(2+).

Its subcellular location is the cytoplasm. The enzyme catalyses oxaloacetate + ATP = phosphoenolpyruvate + ADP + CO2. It functions in the pathway carbohydrate biosynthesis; gluconeogenesis. Its function is as follows. Involved in the gluconeogenesis. Catalyzes the conversion of oxaloacetate (OAA) to phosphoenolpyruvate (PEP) through direct phosphoryl transfer between the nucleoside triphosphate and OAA. The polypeptide is Phosphoenolpyruvate carboxykinase (ATP) (Haemophilus influenzae (strain ATCC 51907 / DSM 11121 / KW20 / Rd)).